The primary structure comprises 219 residues: Elongation factor Ts (219 aa).

The segment at 81 to 84 (SDFV) is involved in Mg(2+) ion dislocation from EF-Tu.

The protein belongs to the EF-Ts family.

It is found in the cytoplasm. Its function is as follows. Associates with the EF-Tu.GDP complex and induces the exchange of GDP to GTP. It remains bound to the aminoacyl-tRNA.EF-Tu.GTP complex up to the GTP hydrolysis stage on the ribosome. This Koribacter versatilis (strain Ellin345) protein is Elongation factor Ts.